We begin with the raw amino-acid sequence, 335 residues long: Serine/threonine-protein kinase crk1 (335 aa).

The Protein kinase domain maps to 11 to 292 (YVKERKVGEG…AQQALEHHYF (282 aa)). ATP-binding positions include 17–25 (VGEGTYAVV) and K40. Catalysis depends on D133, which acts as the Proton acceptor. A Phosphoserine modification is found at S162. S165 carries the post-translational modification Phosphoserine; by CAK. A Phosphoserine modification is found at S318.

Belongs to the protein kinase superfamily. CMGC Ser/Thr protein kinase family. CDC2/CDKX subfamily. One of the nine subunits forming the core-TFIIH basal transcription factor. Interacts with mcs2 and tfb3.

It localises to the cytoplasm. It is found in the nucleus. It catalyses the reaction [DNA-directed RNA polymerase] + ATP = phospho-[DNA-directed RNA polymerase] + ADP + H(+). Protein kinase essential for cell proliferation, where it is required for completion of cytokinesis. Phosphorylates the C-terminal repeat domain (CTD) of RNA polymerase II. The protein is Serine/threonine-protein kinase crk1 (crk1) of Schizosaccharomyces pombe (strain 972 / ATCC 24843) (Fission yeast).